Reading from the N-terminus, the 91-residue chain is uncharacterized protein (91 aa).

Helical transmembrane passes span 6–26, 37–57, and 68–88; these read AAAV…INFF, MPVF…FVSI, and IVLN…GALL.

It is found in the cell membrane. This is an uncharacterized protein from Bacillus subtilis (strain 168).